The chain runs to 1429 residues: Autophagy-related protein 11 (1429 aa).

4 coiled-coil regions span residues 540-579 (GDDD…QSQA), 616-808 (EGID…LDDH), 842-985 (TLVE…HMNS), and 1106-1135 (RRIK…LQKD). Residues 574–622 (HRQSQASRPGNLFQPQGSQQRERVNSASSVRSSRFDDRRRSSEGIDPLM) form a disordered region. Residues 575-592 (RQSQASRPGNLFQPQGSQ) are compositionally biased toward polar residues. Over residues 606-616 (SRFDDRRRSSE) the composition is skewed to basic and acidic residues. 2 disordered regions span residues 1205–1224 (SKSL…ENDN) and 1333–1405 (RAHN…PTRR). Polar residues-rich tracts occupy residues 1206–1215 (KSLQPSSETE) and 1333–1362 (RAHN…GQKN). Residues 1384–1398 (KADEQPRSVVQREDS) show a composition bias toward basic and acidic residues.

This sequence belongs to the ATG11 family. In terms of assembly, homodimer and potential homooligomers. Interacts with ATG1 kinase and the ATG19 and ATG34 cargo protein transporters. Interacts with ATG9, ATG17 and ATG20.

It localises to the preautophagosomal structure membrane. The protein resides in the vacuole membrane. In terms of biological role, involved in cytoplasm to vacuole transport (Cvt), pexophagy, mitophagy and nucleophagy. Recruits mitochondria for their selective degradation via autophagy (mitophagy) during starvation, through its interaction with ATG32. Works as scaffold proteins that recruit ATG proteins to the pre-autophagosome (PAS), the site of vesicle/autophagosome formation. Required for ATG9 anterograde transport from the mitochondria to the PAS. Also recruits the ATG19-prAPE1 complex to the PAS. Required for the Cvt vesicles completion. Autophagy is required for proper vegetative growth, asexual/sexual reproduction, and full virulence. Autophagy is particularly involved in the biosynthesis of deoxynivalenol (DON), an important virulence determinant. In Gibberella zeae (strain ATCC MYA-4620 / CBS 123657 / FGSC 9075 / NRRL 31084 / PH-1) (Wheat head blight fungus), this protein is Autophagy-related protein 11.